The primary structure comprises 218 residues: MAGRVEVSRKELTKFCREAGFEPSPGMLEAIAGYLELLLHWNRSMNLVGTRTWQDTFHTLVVDSLHLAAFLDTLPLPPEPEVWDLGAGAGLPGIPLRAAWQRGNYTMVEAREKRAMFLRMALARHPLPGTNVFQGRAEAFMPSRPPADLVVSRAFMPWRELLDFVSGHLAPGGQVVFLSLDPVPASLPEGWAVEAESLYGTRCGGRYFWSLRPIIVPN.

S-adenosyl-L-methionine-binding positions include glycine 86, leucine 91, 137 to 138 (AE), and arginine 153.

The protein belongs to the methyltransferase superfamily. RNA methyltransferase RsmG family.

It is found in the cytoplasm. It carries out the reaction guanosine(527) in 16S rRNA + S-adenosyl-L-methionine = N(7)-methylguanosine(527) in 16S rRNA + S-adenosyl-L-homocysteine. Specifically methylates the N7 position of guanine in position 527 of 16S rRNA. This is Ribosomal RNA small subunit methyltransferase G from Nitratidesulfovibrio vulgaris (strain ATCC 29579 / DSM 644 / CCUG 34227 / NCIMB 8303 / VKM B-1760 / Hildenborough) (Desulfovibrio vulgaris).